Consider the following 177-residue polypeptide: Parathyroid hormone-related protein (177 aa).

The signal sequence occupies residues 1-24; sequence MLRRLVQQWGVAVFLLSYSVPSCG. Residues 25-34 constitute a propeptide that is removed on maturation; that stretch reads RSVEELGRRL. The tract at residues 57-68 is important for receptor binding; it reads RFFLHHLIAEIH. Residues 74-177 are disordered; that stretch reads ATSEVSPNSK…TSLELNLRRH (104 aa). The span at 76-90 shows a compositional bias: polar residues; that stretch reads SEVSPNSKPAPNTKN. The short motif at 108–129 is the Nuclear localization signal element; sequence TNKVETYKEQPLKTPGKKKKGK. Residues 109 to 118 are compositionally biased toward basic and acidic residues; it reads NKVETYKEQP. A compositionally biased stretch (basic residues) spans 122–132; it reads PGKKKKGKPGK.

Belongs to the parathyroid hormone family. PTHrP interacts with PTH1R (via N-terminal extracellular domain). In terms of processing, there are several secretory forms, including osteostatin, arising from endoproteolytic cleavage of the initial translation product. Each of these secretory forms is believed to have one or more of its own receptors that mediates the normal paracrine, autocrine and endocrine actions.

Its subcellular location is the secreted. It is found in the cytoplasm. It localises to the nucleus. Its function is as follows. Neuroendocrine peptide which is a critical regulator of cellular and organ growth, development, migration, differentiation and survival and of epithelial calcium ion transport. Acts by binding to its receptor, PTH1R, activating G protein-coupled receptor signaling. Regulates endochondral bone development and epithelial-mesenchymal interactions during the formation of the mammary glands and teeth. Required for skeletal homeostasis. Promotes mammary mesenchyme differentiation and bud outgrowth by modulating mesenchymal cell responsiveness to BMPs. Up-regulates BMPR1A expression in the mammary mesenchyme and this increases the sensitivity of these cells to BMPs and allows them to respond to BMP4 in a paracrine and/or autocrine fashion. BMP4 signaling in the mesenchyme, in turn, triggers epithelial outgrowth and augments MSX2 expression, which causes the mammary mesenchyme to inhibit hair follicle formation within the nipple sheath. Potent inhibitor of osteoclastic bone resorption. The sequence is that of Parathyroid hormone-related protein (PTHLH) from Canis lupus familiaris (Dog).